The sequence spans 592 residues: Malic enzyme, hydrogenosomal (592 aa).

A hydrogenosome-targeting transit peptide spans 1–27 (MLAPIQTIARPVSSILPATGALAAKRT). The active-site Proton donor is the Y134. 182 to 205 (VTDGSRILGLGDLGAGGMQIPIGK) contributes to the NADP(+) binding site. Position 187 (R187) interacts with NAD(+). Residue K205 is the Proton acceptor of the active site. 3 residues coordinate a divalent metal cation: E276, D277, and D300. Position 300 (D300) interacts with NAD(+). 335-352 (GAGSSGVGVCETIVDCIV) is a binding site for NADP(+). N443 serves as a coordination point for NAD(+).

It belongs to the malic enzymes family. The cofactor is Mg(2+). Requires Mn(2+) as cofactor.

Its subcellular location is the hydrogenosome. The catalysed reaction is (S)-malate + NADP(+) = pyruvate + CO2 + NADPH. It catalyses the reaction oxaloacetate + H(+) = pyruvate + CO2. This Neocallimastix frontalis (Rumen fungus) protein is Malic enzyme, hydrogenosomal.